We begin with the raw amino-acid sequence, 1293 residues long: Phosphoribosylformylglycinamidine synthase (1293 aa).

Residues 305-316, 384-386, and Ala-676 contribute to the ATP site; these read GAATGSGGEIRD and TGY. The disordered stretch occupies residues 307–326; the sequence is ATGSGGEIRDEGATGRGSKP. Residues Asp-677, Glu-716, Asn-720, and Asp-884 each coordinate Mg(2+). Residue Ser-886 participates in ATP binding. Positions 1040 to 1293 constitute a Glutamine amidotransferase type-1 domain; the sequence is MAILREQGVN…MFRNARVKIG (254 aa). The active-site Nucleophile is Cys-1133. Catalysis depends on residues His-1258 and Glu-1260.

It in the N-terminal section; belongs to the FGAMS family. Monomer.

Its subcellular location is the cytoplasm. The catalysed reaction is N(2)-formyl-N(1)-(5-phospho-beta-D-ribosyl)glycinamide + L-glutamine + ATP + H2O = 2-formamido-N(1)-(5-O-phospho-beta-D-ribosyl)acetamidine + L-glutamate + ADP + phosphate + H(+). Its pathway is purine metabolism; IMP biosynthesis via de novo pathway; 5-amino-1-(5-phospho-D-ribosyl)imidazole from N(2)-formyl-N(1)-(5-phospho-D-ribosyl)glycinamide: step 1/2. Phosphoribosylformylglycinamidine synthase involved in the purines biosynthetic pathway. Catalyzes the ATP-dependent conversion of formylglycinamide ribonucleotide (FGAR) and glutamine to yield formylglycinamidine ribonucleotide (FGAM) and glutamate. This Shewanella frigidimarina (strain NCIMB 400) protein is Phosphoribosylformylglycinamidine synthase.